A 289-amino-acid chain; its full sequence is Mas-related G-protein coupled receptor member G (289 aa).

The Extracellular portion of the chain corresponds to 1–13; that stretch reads MLSIFNIWGTFNR. A helical transmembrane segment spans residues 14–34; sequence VLFFLSLTVSLAGLAGNTLLL. At 35-49 the chain is on the cytoplasmic side; that stretch reads WHLGLRIKKGPFNTY. Residues 50 to 70 form a helical membrane-spanning segment; that stretch reads LLHLAAADFLFLSCQVGFSIA. Residues 71–80 are Extracellular-facing; that stretch reads KIASGYEDTL. Residues 81-101 traverse the membrane as a helical segment; sequence YFPVTFLWFAVGLWLLAAFIV. Residues 102–123 lie on the Cytoplasmic side of the membrane; that stretch reads DCCLSYMFPSFCGPNCRPRYTS. Residues 124–144 traverse the membrane as a helical segment; that stretch reads FVLCLVIWALTMLAVLLPANA. The Extracellular portion of the chain corresponds to 145-164; it reads CGLLYNRMSLLVCLKYHWVS. Residues 165–185 form a helical membrane-spanning segment; the sequence is VVWLGVLASTACGASMFLLVF. Over 186 to 200 the chain is Cytoplasmic; it reads GNCCSSQPPSKFCKL. A helical membrane pass occupies residues 201–221; sequence AQCSGILLFFCRLPLVFYWCL. Position 222 (R222) is a topological domain, extracellular. Residues 223–243 form a helical membrane-spanning segment; that stretch reads PVIKFLLPFFFPLATLLACID. Topologically, residues 244–289 are cytoplasmic; sequence SSAKPLLYYLKGRQLRKEPLQVALNRALGEESQSSSGGISLPMSRV.

It belongs to the G-protein coupled receptor 1 family. Mas subfamily.

It is found in the cell membrane. Its function is as follows. Orphan receptor. May regulate nociceptor function and/or development, including the sensation or modulation of pain. In Rattus norvegicus (Rat), this protein is Mas-related G-protein coupled receptor member G (Mrgprg).